The following is a 215-amino-acid chain: Pyridoxine/pyridoxamine 5'-phosphate oxidase (215 aa).

Residues 9–12 and K69 each bind substrate; that span reads RREY. FMN-binding positions include 64–69, 79–80, K86, and Q108; these read RILLLK and FT. Substrate-binding residues include Y126, R130, and S134. FMN contacts are provided by residues 143 to 144 and W188; that span reads QS. Position 194-196 (194-196) interacts with substrate; it reads RLH. R198 lines the FMN pocket.

It belongs to the pyridoxamine 5'-phosphate oxidase family. Homodimer. FMN is required as a cofactor.

It carries out the reaction pyridoxamine 5'-phosphate + O2 + H2O = pyridoxal 5'-phosphate + H2O2 + NH4(+). The catalysed reaction is pyridoxine 5'-phosphate + O2 = pyridoxal 5'-phosphate + H2O2. The protein operates within cofactor metabolism; pyridoxal 5'-phosphate salvage; pyridoxal 5'-phosphate from pyridoxamine 5'-phosphate: step 1/1. It participates in cofactor metabolism; pyridoxal 5'-phosphate salvage; pyridoxal 5'-phosphate from pyridoxine 5'-phosphate: step 1/1. Catalyzes the oxidation of either pyridoxine 5'-phosphate (PNP) or pyridoxamine 5'-phosphate (PMP) into pyridoxal 5'-phosphate (PLP). In Pseudomonas paraeruginosa (strain DSM 24068 / PA7) (Pseudomonas aeruginosa (strain PA7)), this protein is Pyridoxine/pyridoxamine 5'-phosphate oxidase.